The following is a 205-amino-acid chain: Putative 3-methyladenine DNA glycosylase (205 aa).

Belongs to the DNA glycosylase MPG family.

This is Putative 3-methyladenine DNA glycosylase from Bacillus anthracis (strain A0248).